The following is a 511-amino-acid chain: Adenosine deaminase 2 (511 aa).

The signal sequence occupies residues 1–29; that stretch reads MLVDGPSEWPALRFLLLAVAMSFFGSALS. The tract at residues 30 to 100 is dimerization; the sequence is IDETRAHLLL…HLIERSQVFN (71 aa). Residues H112 and H114 each coordinate Zn(2+). D115 is a substrate binding site. N127 carries an N-linked (GlcNAc...) asparagine glycan. The interval 127-185 is PRB domain; sequence NVTYRPHCHICFTPKGIMQFRFAHPTPRTSEKCSKWILLEDYRKRVQNVTEFDDSLLRN. A disulfide bridge links C137 with C159. N-linked (GlcNAc...) asparagine glycans are attached at residues N174 and N185. Substrate contacts are provided by residues 204 to 211, H293, and G326; that span reads WSKFETIF. H356 contacts Zn(2+). Catalysis depends on E359, which acts as the Proton donor. N-linked (GlcNAc...) asparagine glycosylation is present at N378. H384 acts as the Proton acceptor in catalysis. D441 serves as a coordination point for Zn(2+). D442 is a substrate binding site.

Belongs to the metallo-dependent hydrolases superfamily. Adenosine and AMP deaminases family. ADGF subfamily. In terms of assembly, homodimer. Interacts with adenosine receptors. Binds heparin. The cofactor is Zn(2+).

It localises to the secreted. It carries out the reaction adenosine + H2O + H(+) = inosine + NH4(+). Functionally, adenosine deaminase that may contribute to the degradation of extracellular adenosine, a signaling molecule that controls a variety of cellular responses. Requires elevated adenosine levels for optimal enzyme activity. Binds to cell surfaces via proteoglycans and may play a role in the regulation of cell proliferation and differentiation, independently of its enzyme activity. This is Adenosine deaminase 2 from Pongo abelii (Sumatran orangutan).